The chain runs to 149 residues: Large ribosomal subunit protein uL13 (149 aa).

It belongs to the universal ribosomal protein uL13 family. In terms of assembly, part of the 50S ribosomal subunit.

Functionally, this protein is one of the early assembly proteins of the 50S ribosomal subunit, although it is not seen to bind rRNA by itself. It is important during the early stages of 50S assembly. The polypeptide is Large ribosomal subunit protein uL13 (Bifidobacterium longum (strain DJO10A)).